A 370-amino-acid polypeptide reads, in one-letter code: Cobalt-precorrin-5B C(1)-methyltransferase (370 aa).

The protein belongs to the CbiD family.

The catalysed reaction is Co-precorrin-5B + S-adenosyl-L-methionine = Co-precorrin-6A + S-adenosyl-L-homocysteine. It participates in cofactor biosynthesis; adenosylcobalamin biosynthesis; cob(II)yrinate a,c-diamide from sirohydrochlorin (anaerobic route): step 6/10. Catalyzes the methylation of C-1 in cobalt-precorrin-5B to form cobalt-precorrin-6A. This is Cobalt-precorrin-5B C(1)-methyltransferase from Pseudomonas syringae pv. syringae (strain B728a).